The following is a 92-amino-acid chain: Costars family protein ST45-2 (92 aa).

M1 bears the N-acetylmethionine mark.

The protein belongs to the costars family.

This chain is Costars family protein ST45-2, found in Eutrema halophilum (Salt cress).